A 486-amino-acid chain; its full sequence is Protein nucleotidyltransferase YdiU (486 aa).

Positions 90, 92, 93, 113, 125, 126, 176, and 183 each coordinate ATP. D252 functions as the Proton acceptor in the catalytic mechanism. Mg(2+)-binding residues include N253 and D262. D262 lines the ATP pocket.

Belongs to the SELO family. Mg(2+) serves as cofactor. It depends on Mn(2+) as a cofactor.

The enzyme catalyses L-seryl-[protein] + ATP = 3-O-(5'-adenylyl)-L-seryl-[protein] + diphosphate. It carries out the reaction L-threonyl-[protein] + ATP = 3-O-(5'-adenylyl)-L-threonyl-[protein] + diphosphate. The catalysed reaction is L-tyrosyl-[protein] + ATP = O-(5'-adenylyl)-L-tyrosyl-[protein] + diphosphate. It catalyses the reaction L-histidyl-[protein] + UTP = N(tele)-(5'-uridylyl)-L-histidyl-[protein] + diphosphate. The enzyme catalyses L-seryl-[protein] + UTP = O-(5'-uridylyl)-L-seryl-[protein] + diphosphate. It carries out the reaction L-tyrosyl-[protein] + UTP = O-(5'-uridylyl)-L-tyrosyl-[protein] + diphosphate. Functionally, nucleotidyltransferase involved in the post-translational modification of proteins. It can catalyze the addition of adenosine monophosphate (AMP) or uridine monophosphate (UMP) to a protein, resulting in modifications known as AMPylation and UMPylation. The protein is Protein nucleotidyltransferase YdiU of Pseudomonas putida (strain W619).